A 95-amino-acid chain; its full sequence is Acylphosphatase (95 aa).

The Acylphosphatase-like domain occupies 5 to 93 (RAHVFIRGKV…GEFKDFKILP (89 aa)). Active-site residues include R20 and N38.

The protein belongs to the acylphosphatase family.

The enzyme catalyses an acyl phosphate + H2O = a carboxylate + phosphate + H(+). The chain is Acylphosphatase (acyP) from Pyrobaculum aerophilum (strain ATCC 51768 / DSM 7523 / JCM 9630 / CIP 104966 / NBRC 100827 / IM2).